Reading from the N-terminus, the 545-residue chain is Purple acid phosphatase 13 (545 aa).

The signal sequence occupies residues 1 to 25 (MVVKYTMSMSFFVIFASTVTIIVHG). 2 N-linked (GlcNAc...) asparagine glycosylation sites follow: asparagine 125 and asparagine 145. Aspartate 203 provides a ligand contact to Fe cation. Asparagine 209 carries an N-linked (GlcNAc...) asparagine glycan. Tyrosine 233 is a Fe cation binding site. Asparagine 240, asparagine 254, asparagine 306, asparagine 321, asparagine 351, and asparagine 367 each carry an N-linked (GlcNAc...) asparagine glycan. Residue histidine 389 is the Proton donor of the active site. Histidine 416 serves as a coordination point for Zn(2+). 416–418 (HVD) is a substrate binding site. N-linked (GlcNAc...) asparagine glycosylation is found at asparagine 428, asparagine 466, asparagine 475, and asparagine 510.

The protein belongs to the metallophosphoesterase superfamily. Purple acid phosphatase family. As to quaternary structure, homodimer. The cofactor is Fe cation. Zn(2+) is required as a cofactor. Expressed in stems, leaves, flowers and siliques.

The protein resides in the secreted. It catalyses the reaction a phosphate monoester + H2O = an alcohol + phosphate. The protein is Purple acid phosphatase 13 (PAP13) of Arabidopsis thaliana (Mouse-ear cress).